A 950-amino-acid polypeptide reads, in one-letter code: Leucine--tRNA ligase (950 aa).

The 'HIGH' region motif lies at 42-52 (PYLNGNLHAGH). The 'KMSKS' region signature appears at 629–633 (KMSKS). Lys632 is an ATP binding site. A disordered region spans residues 928–950 (NPPYDPKGRAQNAEPGRPAIYIE).

This sequence belongs to the class-I aminoacyl-tRNA synthetase family.

The protein localises to the cytoplasm. It catalyses the reaction tRNA(Leu) + L-leucine + ATP = L-leucyl-tRNA(Leu) + AMP + diphosphate. The polypeptide is Leucine--tRNA ligase (Methanothrix thermoacetophila (strain DSM 6194 / JCM 14653 / NBRC 101360 / PT) (Methanosaeta thermophila)).